Reading from the N-terminus, the 195-residue chain is ATP-dependent Clp protease proteolytic subunit (195 aa).

Ser97 functions as the Nucleophile in the catalytic mechanism. His122 is a catalytic residue.

This sequence belongs to the peptidase S14 family. As to quaternary structure, fourteen ClpP subunits assemble into 2 heptameric rings which stack back to back to give a disk-like structure with a central cavity, resembling the structure of eukaryotic proteasomes.

The protein localises to the cytoplasm. The catalysed reaction is Hydrolysis of proteins to small peptides in the presence of ATP and magnesium. alpha-casein is the usual test substrate. In the absence of ATP, only oligopeptides shorter than five residues are hydrolyzed (such as succinyl-Leu-Tyr-|-NHMec, and Leu-Tyr-Leu-|-Tyr-Trp, in which cleavage of the -Tyr-|-Leu- and -Tyr-|-Trp bonds also occurs).. Functionally, cleaves peptides in various proteins in a process that requires ATP hydrolysis. Has a chymotrypsin-like activity. Plays a major role in the degradation of misfolded proteins. This Campylobacter hominis (strain ATCC BAA-381 / DSM 21671 / CCUG 45161 / LMG 19568 / NCTC 13146 / CH001A) protein is ATP-dependent Clp protease proteolytic subunit.